A 376-amino-acid chain; its full sequence is 23S rRNA (uracil(747)-C(5))-methyltransferase RlmC (376 aa).

Residues Cys-3, Cys-11, Cys-14, and Cys-87 each coordinate [4Fe-4S] cluster. S-adenosyl-L-methionine-binding residues include Gln-212, Phe-241, Glu-262, and Asn-307. Cys-334 serves as the catalytic Nucleophile.

This sequence belongs to the class I-like SAM-binding methyltransferase superfamily. RNA M5U methyltransferase family. RlmC subfamily.

It carries out the reaction uridine(747) in 23S rRNA + S-adenosyl-L-methionine = 5-methyluridine(747) in 23S rRNA + S-adenosyl-L-homocysteine + H(+). In terms of biological role, catalyzes the formation of 5-methyl-uridine at position 747 (m5U747) in 23S rRNA. This is 23S rRNA (uracil(747)-C(5))-methyltransferase RlmC from Pectobacterium carotovorum subsp. carotovorum (strain PC1).